We begin with the raw amino-acid sequence, 410 residues long: Putative transposase Rv3428c (410 aa).

The Integrase catalytic domain maps to Val-40–Glu-220. The disordered stretch occupies residues Ala-390–Pro-410.

Belongs to the transposase IS21/IS408/IS1162 family.

This chain is Putative transposase Rv3428c, found in Mycobacterium tuberculosis (strain ATCC 25618 / H37Rv).